The sequence spans 743 residues: 1,4-alpha-glucan branching enzyme GlgB (743 aa).

Asp416 serves as the catalytic Nucleophile. Catalysis depends on Glu469, which acts as the Proton donor.

It belongs to the glycosyl hydrolase 13 family. GlgB subfamily. As to quaternary structure, monomer.

The enzyme catalyses Transfers a segment of a (1-&gt;4)-alpha-D-glucan chain to a primary hydroxy group in a similar glucan chain.. It functions in the pathway glycan biosynthesis; glycogen biosynthesis. Catalyzes the formation of the alpha-1,6-glucosidic linkages in glycogen by scission of a 1,4-alpha-linked oligosaccharide from growing alpha-1,4-glucan chains and the subsequent attachment of the oligosaccharide to the alpha-1,6 position. This chain is 1,4-alpha-glucan branching enzyme GlgB, found in Shewanella baltica (strain OS155 / ATCC BAA-1091).